The primary structure comprises 341 residues: MKFTATQIAEILDGKVEGNPEAEVSELAKIEEGSEGSLTFLSNPKYTSFLYTTNASVTIVNDDFEVEQPVNTTLIKVKDAYKAFSTLLEYYNQIKLNKSGIEQPSHISESAKYGEGLYLGAFAYIGENVSIGENVKIYPNVYIGDNVKIGNNVTLFPGVKVYSESLIGSEVTIHSGVVIGADGFGFSPGDTGEYSKVPQIGNVIIEDYVDIGAGTTIDRATLGSTIIRKGAKLDNHIQIAHNVEIGENTAIAAQTGIAGSTKIGKNCLIGGQVGIAGHLTIGNRVKIQAQSGIGRDIKDDEMLQGSPAIGYSDYNKSYIHFKNLPKTMNIIHQLEKKINNG.

Residue His-241 is the Proton acceptor of the active site.

It belongs to the transferase hexapeptide repeat family. LpxD subfamily. In terms of assembly, homotrimer.

It carries out the reaction a UDP-3-O-[(3R)-3-hydroxyacyl]-alpha-D-glucosamine + a (3R)-hydroxyacyl-[ACP] = a UDP-2-N,3-O-bis[(3R)-3-hydroxyacyl]-alpha-D-glucosamine + holo-[ACP] + H(+). Its pathway is bacterial outer membrane biogenesis; LPS lipid A biosynthesis. In terms of biological role, catalyzes the N-acylation of UDP-3-O-acylglucosamine using 3-hydroxyacyl-ACP as the acyl donor. Is involved in the biosynthesis of lipid A, a phosphorylated glycolipid that anchors the lipopolysaccharide to the outer membrane of the cell. This chain is UDP-3-O-acylglucosamine N-acyltransferase, found in Christiangramia forsetii (strain DSM 17595 / CGMCC 1.15422 / KT0803) (Gramella forsetii).